The chain runs to 171 residues: UPF0303 protein YPN_2129 (171 aa).

Belongs to the UPF0303 family.

The protein is UPF0303 protein YPN_2129 of Yersinia pestis bv. Antiqua (strain Nepal516).